The sequence spans 957 residues: Glycine dehydrogenase (decarboxylating) (957 aa).

At lysine 708 the chain carries N6-(pyridoxal phosphate)lysine.

This sequence belongs to the GcvP family. In terms of assembly, the glycine cleavage system is composed of four proteins: P, T, L and H. Requires pyridoxal 5'-phosphate as cofactor.

The catalysed reaction is N(6)-[(R)-lipoyl]-L-lysyl-[glycine-cleavage complex H protein] + glycine + H(+) = N(6)-[(R)-S(8)-aminomethyldihydrolipoyl]-L-lysyl-[glycine-cleavage complex H protein] + CO2. Functionally, the glycine cleavage system catalyzes the degradation of glycine. The P protein binds the alpha-amino group of glycine through its pyridoxal phosphate cofactor; CO(2) is released and the remaining methylamine moiety is then transferred to the lipoamide cofactor of the H protein. The protein is Glycine dehydrogenase (decarboxylating) of Escherichia coli (strain ATCC 8739 / DSM 1576 / NBRC 3972 / NCIMB 8545 / WDCM 00012 / Crooks).